Consider the following 86-residue polypeptide: Antifungal protein 2 (86 aa).

A signal peptide spans 1–21 (MHLSTALFSAIALLAATQVIG). Cystine bridges form between cysteine 43–cysteine 57, cysteine 45–cysteine 74, and cysteine 49–cysteine 83. The interval 44–54 (NCPNNCKHKKG) is lipid-binding. The Gamma-core signature appears at 72–83 (GKCEWQGGQLNC).

It localises to the secreted. Functionally, cysteine-rich antifungal protein highly effective against yeasts such as clinically relevant Candida species, including the multidrug-resistant pathogen Candida auris. Does not cause metabolic inactivity and apoptosis induction, but the fungal cell-killing activity is connected to its pore-forming ability in the cell membrane. NFAP2 has a low potential to trigger resistance in C.albicans in vitro, and the developed tolerance to NFAP2 is not associated with severe phenotypic changes compared with development of resistance to generic fluconazole. The sequence is that of Antifungal protein 2 from Neosartorya fischeri (strain ATCC 1020 / DSM 3700 / CBS 544.65 / FGSC A1164 / JCM 1740 / NRRL 181 / WB 181) (Aspergillus fischerianus).